The primary structure comprises 989 residues: Clumping factor A (989 aa).

Residues 1 to 39 (MNMKKKEKHAIRKKSIGVASVLVGTLIGFGLLSSKEADA) form the signal peptide. Positions 9 to 20 (HAIRKKSIGVAS) match the YSIRK-G/S signaling motif motif. 2 disordered regions span residues 34–205 (SKEA…VSQA) and 529–960 (FNNG…SEDE). Positions 40–542 (SENSVTQSDS…SGSGDGIDKP (503 aa)) are ligand binding A region. Residues 47–65 (SDSASNESKSNDSSSVSAA) show a composition bias toward low complexity. A compositionally biased stretch (polar residues) spans 71–105 (TNVSDTKTSSNTNNGETSVAQNPAQQETTQSSSTN). Composition is skewed to low complexity over residues 106-132 (ATTE…ATTQ) and 143-162 (NQTS…SVNS). The span at 163–205 (PQNSTNAENVSTTQDTSTEATPSNNESAPQNTDASNKDVVSQA) shows a compositional bias: polar residues. Acidic residues predominate over residues 547–565 (QPDEPGEIEPIPEDSDSDP). Residues 566-598 (GSDSGSDSNSDSGSDSGSDSTSDSGSDSASDSD) are compositionally biased toward low complexity. Acidic residues predominate over residues 599-917 (SASDSDSASD…DNDSDSDSNS (319 aa)). Residues 918–936 (DSESGSNNNVVPPNSPKNG) show a composition bias toward low complexity. A compositionally biased stretch (basic and acidic residues) spans 943–952 (NEAKDSKEPL). Residues 952–956 (LPDTG) carry the LPXTG sorting signal motif. At Thr-955 the chain carries Pentaglycyl murein peptidoglycan amidated threonine. The propeptide at 956-989 (GSEDEANTSLIWGLLASLGSLLLFRRKKENKDKK) is removed by sortase.

This sequence belongs to the serine-aspartate repeat-containing protein (SDr) family.

The protein localises to the secreted. It localises to the cell wall. Its function is as follows. Cell surface-associated protein implicated in virulence. Promotes bacterial attachment exclusively to the gamma-chain of human fibrinogen. Induces formation of bacterial clumps, which diminish the ability of group IIA phospholipase A2 to cause bacterial phospholipid hydrolysis and killing. Significantly decreases macrophage phagocytosis possibly thanks to the clumps, clumped bacteria being too large to be phagocytosed. Dominant factor responsible for human platelet aggregation, which may be an important mechanism for initiating infective endocarditis. In Staphylococcus aureus (strain N315), this protein is Clumping factor A (clfA).